We begin with the raw amino-acid sequence, 1185 residues long: Chromosome partition protein Smc (1185 aa).

32–39 (PNGSGKSN) provides a ligand contact to ATP. Residues 228 to 503 (SRLVKKLTIA…LQAVQERYTN (276 aa)) adopt a coiled-coil conformation. The disordered stretch occupies residues 300–323 (TQGQQGVDAERRQNQQSEQERLTA). The span at 307-320 (DAERRQNQQSEQER) shows a compositional bias: basic and acidic residues. The SMC hinge domain occupies 519–637 (SGVAGAVSEL…VDTLDHAMAI (119 aa)). Coiled coils occupy residues 675–928 (QQQQ…RRLE) and 989–1025 (AIDE…ADLD).

The protein belongs to the SMC family. Homodimer.

It localises to the cytoplasm. Functionally, required for chromosome condensation and partitioning. In Lactiplantibacillus plantarum (strain ATCC BAA-793 / NCIMB 8826 / WCFS1) (Lactobacillus plantarum), this protein is Chromosome partition protein Smc.